The chain runs to 209 residues: Orotate phosphoribosyltransferase (209 aa).

5-phospho-alpha-D-ribose 1-diphosphate contacts are provided by residues arginine 96, lysine 100, histidine 102, and 122 to 130; that span reads EDLISTGGS. Serine 126 contributes to the orotate binding site.

Belongs to the purine/pyrimidine phosphoribosyltransferase family. PyrE subfamily. As to quaternary structure, homodimer. Mg(2+) serves as cofactor.

It catalyses the reaction orotidine 5'-phosphate + diphosphate = orotate + 5-phospho-alpha-D-ribose 1-diphosphate. It participates in pyrimidine metabolism; UMP biosynthesis via de novo pathway; UMP from orotate: step 1/2. Catalyzes the transfer of a ribosyl phosphate group from 5-phosphoribose 1-diphosphate to orotate, leading to the formation of orotidine monophosphate (OMP). In Lactococcus lactis subsp. lactis (strain IL1403) (Streptococcus lactis), this protein is Orotate phosphoribosyltransferase.